Here is a 294-residue protein sequence, read N- to C-terminus: UPF0761 membrane protein YPTS_0028 (294 aa).

Transmembrane regions (helical) follow at residues 44–64 (LLSL…FPMF), 67–87 (ISIK…GDII), 108–128 (GLIV…NIIW), 136–156 (LVFS…LVGA), 185–205 (VFPL…VPTV), 212–232 (ALIG…GFAM), and 246–266 (VLAV…IVLL).

This sequence belongs to the UPF0761 family.

The protein localises to the cell inner membrane. The chain is UPF0761 membrane protein YPTS_0028 from Yersinia pseudotuberculosis serotype IB (strain PB1/+).